Here is a 280-residue protein sequence, read N- to C-terminus: Large ribosomal subunit protein uL2 (280 aa).

2 disordered regions span residues 1-59 and 223-280; these read MAIR…GGHK and GVVM…NKKR. Basic residues-rich tracts occupy residues 45–59 and 269–280; these read VHGHITTRHKGGGHK and VRRRRSNKNKKR.

Belongs to the universal ribosomal protein uL2 family. Part of the 50S ribosomal subunit. Forms a bridge to the 30S subunit in the 70S ribosome.

Its function is as follows. One of the primary rRNA binding proteins. Required for association of the 30S and 50S subunits to form the 70S ribosome, for tRNA binding and peptide bond formation. It has been suggested to have peptidyltransferase activity; this is somewhat controversial. Makes several contacts with the 16S rRNA in the 70S ribosome. In Corynebacterium jeikeium (strain K411), this protein is Large ribosomal subunit protein uL2.